We begin with the raw amino-acid sequence, 313 residues long: Porphobilinogen deaminase (313 aa).

S-(dipyrrolylmethanemethyl)cysteine is present on Cys-249.

The protein belongs to the HMBS family. Monomer. Dipyrromethane serves as cofactor.

The enzyme catalyses 4 porphobilinogen + H2O = hydroxymethylbilane + 4 NH4(+). The protein operates within porphyrin-containing compound metabolism; protoporphyrin-IX biosynthesis; coproporphyrinogen-III from 5-aminolevulinate: step 2/4. In terms of biological role, tetrapolymerization of the monopyrrole PBG into the hydroxymethylbilane pre-uroporphyrinogen in several discrete steps. This Paracoccus denitrificans (strain Pd 1222) protein is Porphobilinogen deaminase.